The chain runs to 114 residues: Ribosome-binding factor A (114 aa).

This sequence belongs to the RbfA family. In terms of assembly, monomer. Binds 30S ribosomal subunits, but not 50S ribosomal subunits or 70S ribosomes.

It is found in the cytoplasm. In terms of biological role, one of several proteins that assist in the late maturation steps of the functional core of the 30S ribosomal subunit. Associates with free 30S ribosomal subunits (but not with 30S subunits that are part of 70S ribosomes or polysomes). Required for efficient processing of 16S rRNA. May interact with the 5'-terminal helix region of 16S rRNA. In Vesicomyosocius okutanii subsp. Calyptogena okutanii (strain HA), this protein is Ribosome-binding factor A.